The primary structure comprises 399 residues: Succinate--CoA ligase [ADP-forming] subunit beta (399 aa).

The 246-residue stretch at 9–254 (KELLAKYGVG…ETEEDPAEIE (246 aa)) folds into the ATP-grasp domain. Residues Lys-46, 53-55 (GRG), Val-112, and Glu-117 contribute to the ATP site. Residues Asn-209 and Asp-223 each contribute to the Mg(2+) site. Substrate-binding positions include Asn-274 and 331–333 (GIM).

It belongs to the succinate/malate CoA ligase beta subunit family. In terms of assembly, heterotetramer of two alpha and two beta subunits. Mg(2+) serves as cofactor.

The catalysed reaction is succinate + ATP + CoA = succinyl-CoA + ADP + phosphate. The enzyme catalyses GTP + succinate + CoA = succinyl-CoA + GDP + phosphate. It functions in the pathway carbohydrate metabolism; tricarboxylic acid cycle; succinate from succinyl-CoA (ligase route): step 1/1. Its function is as follows. Succinyl-CoA synthetase functions in the citric acid cycle (TCA), coupling the hydrolysis of succinyl-CoA to the synthesis of either ATP or GTP and thus represents the only step of substrate-level phosphorylation in the TCA. The beta subunit provides nucleotide specificity of the enzyme and binds the substrate succinate, while the binding sites for coenzyme A and phosphate are found in the alpha subunit. This is Succinate--CoA ligase [ADP-forming] subunit beta from Novosphingobium aromaticivorans (strain ATCC 700278 / DSM 12444 / CCUG 56034 / CIP 105152 / NBRC 16084 / F199).